The chain runs to 208 residues: UPF0637 protein BCAH820_3975 (208 aa).

It belongs to the UPF0637 family.

The protein is UPF0637 protein BCAH820_3975 of Bacillus cereus (strain AH820).